Here is a 370-residue protein sequence, read N- to C-terminus: Actin-related protein 2/3 complex subunit 1A-B (370 aa).

WD repeat units follow at residues 6 to 45, 50 to 89, 140 to 179, 202 to 241, 244 to 284, and 322 to 365; these read FLLE…WVKC, EHNG…WKPT, PIRS…VDEK, SSGG…SVSQ, TEFL…TFVS, and LHQN…SYIQ.

This sequence belongs to the WD repeat ARPC1 family. In terms of assembly, component of the Arp2/3 complex.

It localises to the cytoplasm. It is found in the cytoskeleton. The protein localises to the nucleus. Functionally, probably functions as a component of the Arp2/3 complex which is involved in regulation of actin polymerization and together with an activating nucleation-promoting factor (NPF) mediates the formation of branched actin networks. In addition to its role in the cytoplasmic cytoskeleton, the Arp2/3 complex also promotes actin polymerization in the nucleus, thereby regulating gene transcription and repair of damaged DNA. This Xenopus laevis (African clawed frog) protein is Actin-related protein 2/3 complex subunit 1A-B (arpc1a-b).